Reading from the N-terminus, the 199-residue chain is Molybdenum cofactor guanylyltransferase (199 aa).

GTP is bound by residues 12–14 (LAG), K25, N53, D71, and D101. D101 is a binding site for Mg(2+).

The protein belongs to the MobA family. Monomer. It depends on Mg(2+) as a cofactor.

It localises to the cytoplasm. It catalyses the reaction Mo-molybdopterin + GTP + H(+) = Mo-molybdopterin guanine dinucleotide + diphosphate. In terms of biological role, transfers a GMP moiety from GTP to Mo-molybdopterin (Mo-MPT) cofactor (Moco or molybdenum cofactor) to form Mo-molybdopterin guanine dinucleotide (Mo-MGD) cofactor. This Cupriavidus pinatubonensis (strain JMP 134 / LMG 1197) (Cupriavidus necator (strain JMP 134)) protein is Molybdenum cofactor guanylyltransferase.